The chain runs to 685 residues: Sodium-dependent phosphate transporter 1-B (685 aa).

Helical transmembrane passes span 21–41 (IMAP…VLAF), 66–86 (ACIL…AKVS), 106–126 (LMAG…AASF), 162–182 (IVLS…LLFF), 207–227 (ACTI…LLGF), and 234–254 (GIIL…WFFV). A disordered region spans residues 489-511 (EGCIEDVVTDRKSSSSSLEERHD). The span at 496 to 511 (VTDRKSSSSSLEERHD) shows a compositional bias: basic and acidic residues. The next 4 membrane-spanning stretches (helical) occupy residues 517 to 537 (VSLL…FAHG), 565 to 585 (ATPI…LWVW), 606 to 626 (FSIE…GLPI), and 656 to 676 (IFLA…GIMA).

This sequence belongs to the inorganic phosphate transporter (PiT) (TC 2.A.20) family.

Its subcellular location is the membrane. In terms of biological role, sodium-phosphate symporter which plays a fundamental housekeeping role in phosphate transport. The sequence is that of Sodium-dependent phosphate transporter 1-B (slc20a1-b) from Xenopus laevis (African clawed frog).